The following is a 293-amino-acid chain: AKT-interacting protein (293 aa).

Positions 1–11 (MNPFWSMSTNA) are enriched in polar residues. The interval 1–44 (MNPFWSMSTNAGRKRSDGEEQSGSGEQRASPARPPFGKKQLPSI) is disordered. The UBC core domain occupies 75 to 223 (YLEYSLLAEF…VVDSVKLCNS (149 aa)). The tract at residues 260 to 293 (RPEDFNKGLPVSGLSWVKPGSTQPFSKEDNPLQT) is disordered.

Belongs to the ubiquitin-conjugating enzyme family. FTS subfamily.

The protein resides in the cytoplasm. It localises to the cell membrane. Functionally, may function to promote vesicle trafficking and/or fusion. May also regulate apoptosis. The chain is AKT-interacting protein (aktip) from Danio rerio (Zebrafish).